The following is a 162-amino-acid chain: Disulfide bond formation protein B (162 aa).

The Cytoplasmic segment spans residues 1–8; sequence MTPLFRKA. The helical transmembrane segment at 9–25 threads the bilayer; that stretch reads VWLLFAVSVCAFAGSLA. The Periplasmic portion of the chain corresponds to 26–43; the sequence is AQYVLGMEPCVLCISQRL. Cys-35 and Cys-38 are joined by a disulfide. The chain crosses the membrane as a helical span at residues 44–60; it reads CVLATALCTAIVLMCRP. Residues 61 to 67 are Cytoplasmic-facing; that stretch reads RRRAGGL. The helical transmembrane segment at 68 to 85 threads the bilayer; sequence FGAVFISIPAVTGISVAA. Over 86–141 the chain is Periplasmic; sequence YQLWLQSLPPGTAPSCGAPWTFRLKGWSLFDWFEPVVRGFGNCAEPDYLLGVALPV. Cysteines 101 and 128 form a disulfide. Residues 142 to 160 traverse the membrane as a helical segment; that stretch reads WSAAYFLAVVLTVWWAWAR. The Cytoplasmic portion of the chain corresponds to 161–162; sequence AK.

Belongs to the DsbB family.

It is found in the cell inner membrane. Its function is as follows. Required for disulfide bond formation in some periplasmic proteins. Acts by oxidizing the DsbA protein. This is Disulfide bond formation protein B from Neisseria meningitidis serogroup C / serotype 2a (strain ATCC 700532 / DSM 15464 / FAM18).